Here is a 411-residue protein sequence, read N- to C-terminus: Transforming growth factor beta regulator 1 (411 aa).

2 disordered regions span residues 1–29 (MSLL…PKKS) and 119–146 (GPIS…KGKE). An N-acetylserine modification is found at S2. At S10 the chain carries Phosphoserine. In terms of domain architecture, FYR N-terminal spans 182-241 (VFPIGLGGLTVYSLGEIITDRPGFHDESAIYPVGYCSTRIYASMKCPDQKCLYTCQIKDG). Positions 242-321 (GVQPQFEIVP…RKCINYQWVK (80 aa)) constitute an FYR C-terminal domain.

The protein belongs to the TBRG1 family. Interacts with CDKN2A and MDM2. Ubiquitinated; mediated by MDM2 and leading to its subsequent proteasomal degradation. Widely expressed at low levels in most tissues, with highest levels in pancreas, lung and liver. Expression is decreased in primary tumors including lung, liver, breast, pancreas and kidney carcinomas, chronic lymphocytic leukemia and diffuse large B-cell lymphoma.

The protein localises to the nucleus. Its function is as follows. Acts as a growth inhibitor. Can activate p53/TP53, causes G1 arrest and collaborates with CDKN2A to restrict proliferation, but does not require either protein to inhibit DNA synthesis. Redistributes CDKN2A into the nucleoplasm. Involved in maintaining chromosomal stability. The protein is Transforming growth factor beta regulator 1 (TBRG1) of Homo sapiens (Human).